A 474-amino-acid chain; its full sequence is tRNA-2-methylthio-N(6)-dimethylallyladenosine synthase (474 aa).

In terms of domain architecture, MTTase N-terminal spans 3-120 (KKLHIKTWGC…LPDMIDQVRR (118 aa)). Residues Cys-12, Cys-49, Cys-83, Cys-157, Cys-161, and Cys-164 each coordinate [4Fe-4S] cluster. Residues 143–375 (RAEGPTAFVS…QDRITQQAMR (233 aa)) form the Radical SAM core domain. The TRAM domain occupies 378–441 (RHMMGTVQRI…TNSLRGKFIR (64 aa)).

Belongs to the methylthiotransferase family. MiaB subfamily. As to quaternary structure, monomer. [4Fe-4S] cluster serves as cofactor.

The protein localises to the cytoplasm. It catalyses the reaction N(6)-dimethylallyladenosine(37) in tRNA + (sulfur carrier)-SH + AH2 + 2 S-adenosyl-L-methionine = 2-methylsulfanyl-N(6)-dimethylallyladenosine(37) in tRNA + (sulfur carrier)-H + 5'-deoxyadenosine + L-methionine + A + S-adenosyl-L-homocysteine + 2 H(+). Catalyzes the methylthiolation of N6-(dimethylallyl)adenosine (i(6)A), leading to the formation of 2-methylthio-N6-(dimethylallyl)adenosine (ms(2)i(6)A) at position 37 in tRNAs that read codons beginning with uridine. This is tRNA-2-methylthio-N(6)-dimethylallyladenosine synthase from Shewanella sp. (strain ANA-3).